The primary structure comprises 665 residues: UvrABC system protein B (665 aa).

The Helicase ATP-binding domain occupies 25–178 (ASLQAEHRFQ…RQLLRDLTTI (154 aa)). Residue 38–45 (GATGTGKT) coordinates ATP. The Beta-hairpin motif lies at 91-114 (YYDYYQPEAYIPVTDTYIEKTAAI). In terms of domain architecture, Helicase C-terminal spans 429–595 (QVDDLLGEVR…PIVKKASNAI (167 aa)). Residues 626–661 (PELITQLEAQMKEAAKKLEFEEAAKYRDRIKQLRDK) form the UVR domain.

The protein belongs to the UvrB family. In terms of assembly, forms a heterotetramer with UvrA during the search for lesions. Interacts with UvrC in an incision complex.

Its subcellular location is the cytoplasm. Its function is as follows. The UvrABC repair system catalyzes the recognition and processing of DNA lesions. A damage recognition complex composed of 2 UvrA and 2 UvrB subunits scans DNA for abnormalities. Upon binding of the UvrA(2)B(2) complex to a putative damaged site, the DNA wraps around one UvrB monomer. DNA wrap is dependent on ATP binding by UvrB and probably causes local melting of the DNA helix, facilitating insertion of UvrB beta-hairpin between the DNA strands. Then UvrB probes one DNA strand for the presence of a lesion. If a lesion is found the UvrA subunits dissociate and the UvrB-DNA preincision complex is formed. This complex is subsequently bound by UvrC and the second UvrB is released. If no lesion is found, the DNA wraps around the other UvrB subunit that will check the other stand for damage. The polypeptide is UvrABC system protein B (Cyanothece sp. (strain PCC 7425 / ATCC 29141)).